The chain runs to 361 residues: tRNA-specific 2-thiouridylase MnmA (361 aa).

Residues 8–15 (AMSGGVDS) and methionine 34 each bind ATP. Catalysis depends on cysteine 104, which acts as the Nucleophile. A disulfide bridge links cysteine 104 with cysteine 202. Glycine 128 serves as a coordination point for ATP. The segment at 152–154 (KDQ) is interaction with tRNA. The active-site Cysteine persulfide intermediate is the cysteine 202. Positions 307–308 (RY) are interaction with tRNA.

It belongs to the MnmA/TRMU family.

The protein resides in the cytoplasm. It carries out the reaction S-sulfanyl-L-cysteinyl-[protein] + uridine(34) in tRNA + AH2 + ATP = 2-thiouridine(34) in tRNA + L-cysteinyl-[protein] + A + AMP + diphosphate + H(+). In terms of biological role, catalyzes the 2-thiolation of uridine at the wobble position (U34) of tRNA, leading to the formation of s(2)U34. The chain is tRNA-specific 2-thiouridylase MnmA from Caldicellulosiruptor saccharolyticus (strain ATCC 43494 / DSM 8903 / Tp8T 6331).